The chain runs to 773 residues: FT-interacting protein 3 (773 aa).

Positions 1–16 (MQRPPPEDFSLKETRP) are enriched in basic and acidic residues. Residues 1–24 (MQRPPPEDFSLKETRPHLGGGKLS) are disordered. C2 domains lie at 22 to 142 (KLSG…PQWY), 181 to 305 (VSGT…SRWY), and 345 to 471 (YSSD…THSY). The Ca(2+) site is built by Asp-55, Asp-61, Asp-108, Asp-110, and Asp-115. A run of 3 helical transmembrane segments spans residues 574-594 (IMGVLSGLIAVGKWFEQICNW), 608-628 (IILVLYPELILPTIFLYLFLI), and 716-736 (LFVLFCLIAAVILYVTPFQVV).

The protein belongs to the MCTP family. Interacts with and regulates subcellular localization and trafficking of STM. Requires Ca(2+) as cofactor. Accumulates in vascular tissues, leaf primordia and flowers. Highly expressed in roots meristems and in both vegetative and inflorescence shoot apical meristems (SAMs).

It is found in the endoplasmic reticulum membrane. The protein resides in the cytoplasm. The protein localises to the vesicle. It localises to the cell membrane. Its subcellular location is the endosome membrane. It is found in the golgi apparatus membrane. In terms of biological role, required for proliferation and differentiation of shoot stem cells in the shoot apical meristem (SAM), thus determining the appropriate balance between the maintenance of shoot stem cells and their differentiation into other aboveground plant parts via the control of subcellular localization and intercellular trafficking of STM in the shoot apex. Prevents intracellular trafficking of STM to the plasma membrane in cells in the peripheral shoot meristem region thus facilitating STM recycling to the nucleus to maintain stem cells. May function as a signaling molecule by regulating the trafficking of other regulators. This chain is FT-interacting protein 3, found in Arabidopsis thaliana (Mouse-ear cress).